Reading from the N-terminus, the 512-residue chain is ATP synthase subunit alpha (512 aa).

169–176 (GDRQTGKT) contacts ATP.

Belongs to the ATPase alpha/beta chains family. In terms of assembly, F-type ATPases have 2 components, CF(1) - the catalytic core - and CF(0) - the membrane proton channel. CF(1) has five subunits: alpha(3), beta(3), gamma(1), delta(1), epsilon(1). CF(0) has three main subunits: a(1), b(2) and c(9-12). The alpha and beta chains form an alternating ring which encloses part of the gamma chain. CF(1) is attached to CF(0) by a central stalk formed by the gamma and epsilon chains, while a peripheral stalk is formed by the delta and b chains.

The protein localises to the cell inner membrane. The catalysed reaction is ATP + H2O + 4 H(+)(in) = ADP + phosphate + 5 H(+)(out). Its function is as follows. Produces ATP from ADP in the presence of a proton gradient across the membrane. The alpha chain is a regulatory subunit. The protein is ATP synthase subunit alpha of Aromatoleum aromaticum (strain DSM 19018 / LMG 30748 / EbN1) (Azoarcus sp. (strain EbN1)).